A 175-amino-acid polypeptide reads, in one-letter code: Cytochrome c-type biogenesis protein CcmE (175 aa).

Topologically, residues 1-8 (MNAVRRKK) are cytoplasmic. A helical; Signal-anchor for type II membrane protein transmembrane segment spans residues 9–29 (LIWVAATLAGAIIAVLLVIYA). The Periplasmic portion of the chain corresponds to 30-175 (IGQQTDYYFD…GNHTTSTLQE (146 aa)). Residues His-124 and Tyr-128 each coordinate heme. Residues 142 to 175 (AAKGVTPTSEQFSPAIPVKQTAGEGNHTTSTLQE) are disordered.

It belongs to the CcmE/CycJ family.

It localises to the cell inner membrane. Its function is as follows. Heme chaperone required for the biogenesis of c-type cytochromes. Transiently binds heme delivered by CcmC and transfers the heme to apo-cytochromes in a process facilitated by CcmF and CcmH. The protein is Cytochrome c-type biogenesis protein CcmE of Psychrobacter sp. (strain PRwf-1).